The following is a 186-amino-acid chain: ADP-ribosylation factor-like protein 8B-A (186 aa).

The note=Mediates targeting to membranes intramembrane region spans 1-19 (MLALINRLLDWFKSLFWKE). GTP is bound by residues 29–35 (QYSGKTT), 71–75 (DIGGQ), and 130–133 (NKRD).

Belongs to the small GTPase superfamily. Arf family.

It localises to the late endosome membrane. Its subcellular location is the lysosome membrane. The protein localises to the cytoplasm. The protein resides in the cytoskeleton. It is found in the spindle. It localises to the early endosome membrane. Functionally, small GTPase which cycles between active GTP-bound and inactive GDP-bound states. In its active state, binds to a variety of effector proteins playing a key role in the regulation of lysosomal positioning which is important for nutrient sensing, natural killer cell-mediated cytotoxicity and antigen presentation. Along with its effectors, orchestrates lysosomal transport and fusion. This Danio rerio (Zebrafish) protein is ADP-ribosylation factor-like protein 8B-A (arl8ba).